We begin with the raw amino-acid sequence, 336 residues long: Anthranilate phosphoribosyltransferase (336 aa).

Residues Gly80, 83-84, Thr88, 90-93, 108-116, and Ser120 contribute to the 5-phospho-alpha-D-ribose 1-diphosphate site; these read GD, NIST, and KHGNRSITS. Gly80 contributes to the anthranilate binding site. Position 92 (Ser92) interacts with Mg(2+). Asn111 serves as a coordination point for anthranilate. Arg166 lines the anthranilate pocket. Residues Asp224 and Glu225 each coordinate Mg(2+).

This sequence belongs to the anthranilate phosphoribosyltransferase family. In terms of assembly, homodimer. It depends on Mg(2+) as a cofactor.

It catalyses the reaction N-(5-phospho-beta-D-ribosyl)anthranilate + diphosphate = 5-phospho-alpha-D-ribose 1-diphosphate + anthranilate. It functions in the pathway amino-acid biosynthesis; L-tryptophan biosynthesis; L-tryptophan from chorismate: step 2/5. Its function is as follows. Catalyzes the transfer of the phosphoribosyl group of 5-phosphorylribose-1-pyrophosphate (PRPP) to anthranilate to yield N-(5'-phosphoribosyl)-anthranilate (PRA). The sequence is that of Anthranilate phosphoribosyltransferase from Caldicellulosiruptor saccharolyticus (strain ATCC 43494 / DSM 8903 / Tp8T 6331).